The primary structure comprises 186 residues: Chromosome-anchoring protein RacA (186 aa).

Residues 3–23 constitute a DNA-binding region (H-T-H motif); the sequence is TADAANELGVSTKTVQRWVKQ. Positions 90–170 form a coiled coil; it reads ERLEERLQRF…NRREKDTAVR (81 aa). Residues 158 to 186 are disordered; the sequence is ESMNRREKDTAVRREEKKPKSKLKSIFSF. The span at 160–175 shows a compositional bias: basic and acidic residues; it reads MNRREKDTAVRREEKK.

The protein belongs to the RacA family.

The protein resides in the cytoplasm. Its function is as follows. Required for the formation of axial filaments and for anchoring the origin regions at the cell poles in sporulating cells, thus ensuring proper chromosome segregation in the prespore. Binds in a dispersed manner throughout the chromosome but preferentially to sites clustered in the origin portion of the chromosome, causing condensation of the chromosome and its remodeling into an elongated, anchored structure. The sequence is that of Chromosome-anchoring protein RacA from Bacillus licheniformis (strain ATCC 14580 / DSM 13 / JCM 2505 / CCUG 7422 / NBRC 12200 / NCIMB 9375 / NCTC 10341 / NRRL NRS-1264 / Gibson 46).